Consider the following 241-residue polypeptide: 1-(5-phosphoribosyl)-5-[(5-phosphoribosylamino)methylideneamino] imidazole-4-carboxamide isomerase (241 aa).

Residue D8 is the Proton acceptor of the active site. D129 (proton donor) is an active-site residue.

The protein belongs to the HisA/HisF family.

Its subcellular location is the cytoplasm. It carries out the reaction 1-(5-phospho-beta-D-ribosyl)-5-[(5-phospho-beta-D-ribosylamino)methylideneamino]imidazole-4-carboxamide = 5-[(5-phospho-1-deoxy-D-ribulos-1-ylimino)methylamino]-1-(5-phospho-beta-D-ribosyl)imidazole-4-carboxamide. It participates in amino-acid biosynthesis; L-histidine biosynthesis; L-histidine from 5-phospho-alpha-D-ribose 1-diphosphate: step 4/9. This is 1-(5-phosphoribosyl)-5-[(5-phosphoribosylamino)methylideneamino] imidazole-4-carboxamide isomerase from Rhodospirillum rubrum (strain ATCC 11170 / ATH 1.1.1 / DSM 467 / LMG 4362 / NCIMB 8255 / S1).